The chain runs to 428 residues: D-inositol 3-phosphate glycosyltransferase (428 aa).

Residue His5 participates in 1D-myo-inositol 3-phosphate binding. UDP-N-acetyl-alpha-D-glucosamine is bound by residues 11-12 (QP) and Gly19. 1D-myo-inositol 3-phosphate is bound by residues 16-21 (DAGGMN), Lys74, Tyr107, Thr131, and Arg151. Residues Arg225, Lys230, and Gln283 each contribute to the UDP-N-acetyl-alpha-D-glucosamine site. Mg(2+) contacts are provided by Phe292, Gln293, and Ala295. Residues Glu305 and Glu313 each contribute to the UDP-N-acetyl-alpha-D-glucosamine site. Thr319 is a binding site for Mg(2+).

The protein belongs to the glycosyltransferase group 1 family. MshA subfamily. In terms of assembly, homodimer.

It carries out the reaction 1D-myo-inositol 3-phosphate + UDP-N-acetyl-alpha-D-glucosamine = 1D-myo-inositol 2-acetamido-2-deoxy-alpha-D-glucopyranoside 3-phosphate + UDP + H(+). Catalyzes the transfer of a N-acetyl-glucosamine moiety to 1D-myo-inositol 3-phosphate to produce 1D-myo-inositol 2-acetamido-2-deoxy-glucopyranoside 3-phosphate in the mycothiol biosynthesis pathway. The sequence is that of D-inositol 3-phosphate glycosyltransferase from Mycobacterium leprae (strain Br4923).